A 756-amino-acid chain; its full sequence is Hyperosmolality-gated Ca2+ permeable channel 1.5 (756 aa).

10 consecutive transmembrane segments (helical) span residues 7-27, 101-121, 154-174, 373-393, 425-445, 465-485, 510-530, 574-594, 628-648, and 651-671; these read IGVAATINILTAFAFFIAFAI, IYLLGLKIFFPIACIAFTVMV, SRFWVHLCMAYVITFWTCFVL, LVIAVAFFFLTFFFMIPIAFV, FLPGIALKIFLIVLPSILMLM, YYMFQFINVFLCSIIAGTALQ, ATFFITYIMVDGWAGVAGEIL, FILGLVYAAVSPILLPFILVF, VVIALIVSQLLLMGLLSTKKA, and STPLLFILPVLTIGFHKFCQG. The tract at residues 731–756 is disordered; the sequence is PDKTPDLVATKRGSRRFNSGSAETFT. Residues 746–756 are compositionally biased toward polar residues; that stretch reads RFNSGSAETFT.

This sequence belongs to the CSC1 (TC 1.A.17) family.

Its subcellular location is the membrane. Its function is as follows. Acts as an osmosensitive calcium-permeable cation channel. This chain is Hyperosmolality-gated Ca2+ permeable channel 1.5, found in Arabidopsis thaliana (Mouse-ear cress).